The sequence spans 438 residues: Ribosomal protein uS12 methylthiotransferase RimO (438 aa).

Residues 4–120 form the MTTase N-terminal domain; sequence HSLFLLSLGC…ILASLGARYR (117 aa). [4Fe-4S] cluster-binding residues include Cys13, Cys49, Cys83, Cys144, Cys148, and Cys151. Positions 130 to 359 constitute a Radical SAM core domain; sequence LTPSHYAYLK…MELQEAVAES (230 aa). The TRAM domain maps to 362–429; it reads REFEGKEIEV…AHELYGEIVQ (68 aa).

The protein belongs to the methylthiotransferase family. RimO subfamily. It depends on [4Fe-4S] cluster as a cofactor.

The protein resides in the cytoplasm. The catalysed reaction is L-aspartate(89)-[ribosomal protein uS12]-hydrogen + (sulfur carrier)-SH + AH2 + 2 S-adenosyl-L-methionine = 3-methylsulfanyl-L-aspartate(89)-[ribosomal protein uS12]-hydrogen + (sulfur carrier)-H + 5'-deoxyadenosine + L-methionine + A + S-adenosyl-L-homocysteine + 2 H(+). In terms of biological role, catalyzes the methylthiolation of an aspartic acid residue of ribosomal protein uS12. This chain is Ribosomal protein uS12 methylthiotransferase RimO, found in Chlorobium chlorochromatii (strain CaD3).